Consider the following 254-residue polypeptide: Hemin import ATP-binding protein HmuV (254 aa).

The ABC transporter domain occupies Leu2–Asp239. Gly34–Ser41 contacts ATP.

The protein belongs to the ABC transporter superfamily. Heme (hemin) importer (TC 3.A.1.14.5) family. In terms of assembly, the complex is composed of two ATP-binding proteins (HmuV), two transmembrane proteins (HmuU) and a solute-binding protein (HmuT).

Its subcellular location is the cell inner membrane. Functionally, part of the ABC transporter complex HmuTUV involved in hemin import. Responsible for energy coupling to the transport system. In Shewanella denitrificans (strain OS217 / ATCC BAA-1090 / DSM 15013), this protein is Hemin import ATP-binding protein HmuV.